The following is a 306-amino-acid chain: tRNA pseudouridine synthase B (306 aa).

The Nucleophile role is filled by aspartate 51.

The protein belongs to the pseudouridine synthase TruB family. Type 1 subfamily.

It catalyses the reaction uridine(55) in tRNA = pseudouridine(55) in tRNA. Functionally, responsible for synthesis of pseudouridine from uracil-55 in the psi GC loop of transfer RNAs. The sequence is that of tRNA pseudouridine synthase B from Nocardia farcinica (strain IFM 10152).